The sequence spans 367 residues: D-alanine--D-alanine ligase (367 aa).

In terms of domain architecture, ATP-grasp spans 139–340 (KLILKEKNIP…FSQVIDNMIS (202 aa)). Residue 169–224 (KEVLEYPMIVKPARLGSSIGVKKVNDKCELEEAIETAFSFDDKVIVEKWIDSRELN) coordinates ATP. 3 residues coordinate Mg(2+): Asp298, Glu311, and Asn313.

Belongs to the D-alanine--D-alanine ligase family. Mg(2+) is required as a cofactor. Mn(2+) serves as cofactor.

Its subcellular location is the cytoplasm. It carries out the reaction 2 D-alanine + ATP = D-alanyl-D-alanine + ADP + phosphate + H(+). It participates in cell wall biogenesis; peptidoglycan biosynthesis. Cell wall formation. This chain is D-alanine--D-alanine ligase, found in Thermosipho africanus (strain TCF52B).